Reading from the N-terminus, the 405-residue chain is Mevalonate 3,5-bisphosphate decarboxylase (405 aa).

Belongs to the mevalonate 3,5-bisphosphate decarboxylase family. In terms of assembly, homodimer.

It catalyses the reaction (R)-3,5-bisphosphomevalonate + H(+) = isopentenyl phosphate + phosphate + CO2. Its pathway is isoprenoid biosynthesis; isopentenyl diphosphate biosynthesis via mevalonate pathway. Catalyzes the ATP-independent decarboxylation of (R)-mevalonate 3,5-bisphosphate to isopentenyl phosphate. Functions in an alternative mevalonate pathway, only present in extreme acidophiles of the Thermoplasmatales order, which passes through mevalonate 3-phosphate rather than mevalonate 5-phosphate. The protein is Mevalonate 3,5-bisphosphate decarboxylase of Thermoplasma acidophilum (strain ATCC 25905 / DSM 1728 / JCM 9062 / NBRC 15155 / AMRC-C165).